Here is a 132-residue protein sequence, read N- to C-terminus: Small ribosomal subunit protein uS8c (132 aa).

This sequence belongs to the universal ribosomal protein uS8 family. As to quaternary structure, part of the 30S ribosomal subunit.

The protein resides in the plastid. It is found in the chloroplast. One of the primary rRNA binding proteins, it binds directly to 16S rRNA central domain where it helps coordinate assembly of the platform of the 30S subunit. The polypeptide is Small ribosomal subunit protein uS8c (rps8) (Marchantia polymorpha (Common liverwort)).